The primary structure comprises 2028 residues: Protein Daple (2028 aa).

In terms of domain architecture, Calponin-homology (CH) spans 11–131 (LFLQSPLVTW…KVLLLVLGCA (121 aa)). Positions 222–250 (AQHPPSPIKSSSADSTPSPTSSLSSEDKQ) are disordered. Residues Ser-227 and Ser-239 each carry the phosphoserine modification. Low complexity predominate over residues 229–245 (IKSSSADSTPSPTSSLS). Coiled-coil stretches lie at residues 247–428 (EDKQ…SMNE), 456–1017 (ELNE…QGEG), 1045–1094 (HKEA…SSQI), and 1139–1393 (LQNH…DQYK). The residue at position 486 (Ser-486) is a Phosphoserine. The span at 1011–1024 (RQNQGEGQHLQNSF) shows a compositional bias: polar residues. The segment at 1011 to 1043 (RQNQGEGQHLQNSFKHPAGKTAASHQGKEAWGP) is disordered. Residues 1419–1428 (KEGSRERLKS) show a composition bias toward basic and acidic residues. Disordered stretches follow at residues 1419-1724 (KEGS…GAKM) and 1736-1803 (AAPT…SLSR). 3 stretches are compositionally biased toward low complexity: residues 1439 to 1450 (SSDPASPAASQP), 1517 to 1534 (SRTC…NSTP), and 1568 to 1588 (SRPS…PLNL). At Ser-1444 the chain carries Phosphoserine. Polar residues predominate over residues 1589-1604 (KGSSEQLHGRSESFSS). Ser-1601 is modified (phosphoserine). Residues 1661 to 1691 (CSASPSSEMVTLEEFLEESNRSSPTHDTPSC) carry the GBA motif. The span at 1689–1704 (PSCRDDLLSDYFRKAS) shows a compositional bias: basic and acidic residues. Over residues 1792 to 1803 (HAPASRSASLSR) the composition is skewed to low complexity. Position 1806 is a phosphoserine (Ser-1806). Residues 1816–2021 (SGPEACKQES…PEPGGDPQTV (206 aa)) are disordered. Polar residues predominate over residues 1842–1855 (SHTLQSPAPPSSHS). Residues 1879 to 1897 (RPLDTRRFSLAPPKEERLA) are compositionally biased toward basic and acidic residues. The segment covering 1902 to 1924 (SATAPAIATAGAGAAAAGSGSNS) has biased composition (low complexity). Thr-1954 is subject to Phosphothreonine. Positions 2025 to 2028 (YGCV) match the PDZ-binding motif. The segment at 2026-2028 (GCV) is DVL1-binding.

This sequence belongs to the CCDC88 family. In terms of assembly, homooligomer. Interacts with DVL1 (via PDZ domain); dissociates following initiation of non-canonical Wnt signaling. Interacts (via C-terminus) with ligand-activated Wnt receptor FZD7; competes with DVL1 for binding to FZD7 and displaces DVL1 from ligand-activated FZD7. Interacts (via GBA motif) with guanine nucleotide-binding protein G(i) alpha subunits GNAI1, GNAI2 and GNAI3 (inactive GDP-bound form); interacts with higher affinity with GNAI1 and GNAI3 than with GNAI2 and interaction leads to G(i) alpha subunit activation. Does not interact with GNAO1.

The protein resides in the cytoplasm. Its subcellular location is the cell junction. Its function is as follows. Required for activation of guanine nucleotide-binding proteins (G-proteins) during non-canonical Wnt signaling. Binds to ligand-activated Wnt receptor FZD7, displacing DVL1 from the FZD7 receptor and leading to inhibition of canonical Wnt signaling. Acts as a non-receptor guanine nucleotide exchange factor by also binding to guanine nucleotide-binding protein G(i) alpha (Gi-alpha) subunits, leading to their activation. Binding to Gi-alpha subunits displaces the beta and gamma subunits from the heterotrimeric G-protein complex, triggering non-canonical Wnt responses such as activation of RAC1 and PI3K-AKT signaling. Promotes apical constriction of cells via ARHGEF18. The chain is Protein Daple (CCDC88C) from Homo sapiens (Human).